Reading from the N-terminus, the 1170-residue chain is Glucose transport transcription regulator RGT1 (1170 aa).

Residues 1 to 22 (MNELNTVSTNSSDSTKDGGTSN) show a composition bias toward polar residues. Disordered regions lie at residues 1–47 (MNEL…SRAC) and 77–149 (SFDR…SNSV). The segment at residues 47 to 76 (CDQCRKKKIKCDYKDEKGVCSNCQRNGDRC) is a DNA-binding region (zn(2)-C6 fungal-type). Residues 99 to 108 (RTNEIQDHNN) are compositionally biased toward basic and acidic residues. Low complexity predominate over residues 113–138 (NTFDNSNNTLNNNTGNSGDNGINSNT). Residues 139-149 (VPSTPSRSNSV) are compositionally biased toward polar residues. A phosphoserine mark is found at serine 202, serine 205, serine 208, and serine 229. Disordered regions lie at residues 226–254 (VQQS…SASG), 269–288 (APTD…IPSL), 293–323 (SNSL…LQQG), 384–506 (AQQT…HPMT), and 944–977 (NYRP…SAAP). Low complexity predominate over residues 239 to 250 (SGNANGSVTGSG). A compositionally biased stretch (basic and acidic residues) spans 271 to 280 (TDDHNGEQTR). Serine 283 and serine 284 each carry phosphoserine. 3 stretches are compositionally biased toward low complexity: residues 293 to 302 (SNSLLLGGQP), 309 to 323 (QQSQ…LQQG), and 385 to 397 (QQTQ…QVPQ). Serine 410 and serine 414 each carry phosphoserine. Residues 411-422 (APVSVTLSTDRL) show a composition bias toward polar residues. The segment covering 424-444 (GNENNNGEINNNNGSNNSGSS) has biased composition (low complexity). Residues 445-457 (KDTSQHSQESVTT) show a composition bias toward polar residues. A compositionally biased stretch (basic residues) spans 473 to 488 (STKKRRKSYVSKKTKP). Residues 493–506 (SISITSKDSAHPMT) are compositionally biased toward polar residues. Serine 1130 bears the Phosphoserine mark.

This sequence belongs to the EDS1/RGT1 family. Post-translationally, glucose-induced phosphorylation regulates the DNA-binding activity. Hyperphosphorylation in cells growing on high levels of glucose does prevents DNA-binding and dephosphorylation restores DNA-binding ability.

The protein localises to the nucleus. Its subcellular location is the cytoplasm. In terms of biological role, glucose-responsive transcription factor that regulates expression of several glucose transporter (HXT) genes in response to glucose. In the absence of glucose, it functions as a transcriptional repressor, whereas high concentrations of glucose cause it to function as a transcriptional activator. In cells growing on low levels of glucose, has a neutral role, neither repressing nor activating transcription. Binds the consensus binding site sequence 5'-CGGANNA-3', of which multiple copies are present in all HXT promoters regulated by RGT1. This chain is Glucose transport transcription regulator RGT1 (RGT1), found in Saccharomyces cerevisiae (strain JAY291) (Baker's yeast).